Here is a 406-residue protein sequence, read N- to C-terminus: Olfactomedin-like protein 3 (406 aa).

An N-terminal signal peptide occupies residues 1–21; that stretch reads MGPHTQLLILLLLSWLGPLQG. The stretch at 22 to 101 forms a coiled coil; sequence QQHHLVEYME…REVDYLETQN (80 aa). The Olfactomedin-like domain maps to 134-401; the sequence is DCGYTISQVR…QIVYKLEMRK (268 aa). The cysteines at positions 135 and 328 are disulfide-linked. An N-linked (GlcNAc...) asparagine glycan is attached at Asn-248.

The protein belongs to the OLFML3 family.

The protein localises to the secreted. Secreted scaffold protein that plays an essential role in dorsoventral patterning during early development. Stabilizes axial formation by restricting chordin (CHRD) activity on the dorsal side. Acts by facilitating the association between the tolloid proteases and their substrate chordin (CHRD), leading to enhance chordin (CHRD) degradation. May have matrix-related function involved in placental and embryonic development, or play a similar role in other physiological processes. In Bos taurus (Bovine), this protein is Olfactomedin-like protein 3 (OLFML3).